The chain runs to 251 residues: tRNA (guanine-N(7)-)-methyltransferase (251 aa).

Residues 1 to 29 (MTQTLSSQDPQAPAAPPMPGAAGSAPADV) form a disordered region. S-adenosyl-L-methionine contacts are provided by glutamate 84, glutamate 109, aspartate 136, and aspartate 159. The active site involves aspartate 159. Lysine 163 contributes to the substrate binding site. An interaction with RNA region spans residues 165 to 170 (RHNKRR). Substrate-binding positions include aspartate 195 and 230-233 (TKFE).

It belongs to the class I-like SAM-binding methyltransferase superfamily. TrmB family.

It carries out the reaction guanosine(46) in tRNA + S-adenosyl-L-methionine = N(7)-methylguanosine(46) in tRNA + S-adenosyl-L-homocysteine. Its pathway is tRNA modification; N(7)-methylguanine-tRNA biosynthesis. Its function is as follows. Catalyzes the formation of N(7)-methylguanine at position 46 (m7G46) in tRNA. In Acidovorax sp. (strain JS42), this protein is tRNA (guanine-N(7)-)-methyltransferase.